A 516-amino-acid chain; its full sequence is 3-phosphoshikimate 1-carboxyvinyltransferase, chloroplastic (516 aa).

The N-terminal 72 residues, 1-72 (MAQSSRICHG…KVTASVSTSE (72 aa)), are a transit peptide targeting the chloroplast. Residues K95, S96, and R100 each contribute to the 3-phosphoshikimate site. Residue K95 participates in phosphoenolpyruvate binding. G173 and R203 together coordinate phosphoenolpyruvate. 3-phosphoshikimate is bound by residues S250, S251, Q252, S278, D403, and K430. Phosphoenolpyruvate is bound at residue Q252. The active-site Proton acceptor is D403. R434, R476, and K501 together coordinate phosphoenolpyruvate.

This sequence belongs to the EPSP synthase family.

Its subcellular location is the plastid. It is found in the chloroplast. It carries out the reaction 3-phosphoshikimate + phosphoenolpyruvate = 5-O-(1-carboxyvinyl)-3-phosphoshikimate + phosphate. It functions in the pathway metabolic intermediate biosynthesis; chorismate biosynthesis; chorismate from D-erythrose 4-phosphate and phosphoenolpyruvate: step 6/7. Functionally, catalyzes the transfer of the enolpyruvyl moiety of phosphoenolpyruvate (PEP) to the 5-hydroxyl of shikimate-3-phosphate (S3P) to produce enolpyruvyl shikimate-3-phosphate and inorganic phosphate. The sequence is that of 3-phosphoshikimate 1-carboxyvinyltransferase, chloroplastic from Brassica napus (Rape).